Consider the following 178-residue polypeptide: 6,7-dimethyl-8-ribityllumazine synthase (178 aa).

5-amino-6-(D-ribitylamino)uracil is bound by residues phenylalanine 23, 61 to 63 (SFE), and 85 to 87 (AVI). Residue 90–91 (QT) coordinates (2S)-2-hydroxy-3-oxobutyl phosphate. Catalysis depends on histidine 93, which acts as the Proton donor. Tyrosine 118 is a binding site for 5-amino-6-(D-ribitylamino)uracil. Arginine 132 serves as a coordination point for (2S)-2-hydroxy-3-oxobutyl phosphate.

The protein belongs to the DMRL synthase family.

The enzyme catalyses (2S)-2-hydroxy-3-oxobutyl phosphate + 5-amino-6-(D-ribitylamino)uracil = 6,7-dimethyl-8-(1-D-ribityl)lumazine + phosphate + 2 H2O + H(+). The protein operates within cofactor biosynthesis; riboflavin biosynthesis; riboflavin from 2-hydroxy-3-oxobutyl phosphate and 5-amino-6-(D-ribitylamino)uracil: step 1/2. Catalyzes the formation of 6,7-dimethyl-8-ribityllumazine by condensation of 5-amino-6-(D-ribitylamino)uracil with 3,4-dihydroxy-2-butanone 4-phosphate. This is the penultimate step in the biosynthesis of riboflavin. The sequence is that of 6,7-dimethyl-8-ribityllumazine synthase from Thermosynechococcus vestitus (strain NIES-2133 / IAM M-273 / BP-1).